Consider the following 662-residue polypeptide: Chaperone protein HtpG (662 aa).

An a; substrate-binding region spans residues 1–352; it reads MSKQTLSFQA…SADLPLNVSR (352 aa). The interval 353–594 is b; sequence ELLQESRDVR…GDGMSTQLAR (242 aa). Positions 382-402 are disordered; sequence HDRHDSPAPQPAEGADRVSDV. Positions 595-662 are c; that stretch reads LLKQAGQQAP…YVKRVNALLV (68 aa).

The protein belongs to the heat shock protein 90 family. As to quaternary structure, homodimer.

The protein resides in the cytoplasm. Molecular chaperone. Has ATPase activity. The sequence is that of Chaperone protein HtpG from Verminephrobacter eiseniae (strain EF01-2).